We begin with the raw amino-acid sequence, 448 residues long: UDP-N-acetylmuramate--L-alanine ligase (448 aa).

Residue 118–124 (GTHGKTT) coordinates ATP.

The protein belongs to the MurCDEF family.

The protein resides in the cytoplasm. It catalyses the reaction UDP-N-acetyl-alpha-D-muramate + L-alanine + ATP = UDP-N-acetyl-alpha-D-muramoyl-L-alanine + ADP + phosphate + H(+). It functions in the pathway cell wall biogenesis; peptidoglycan biosynthesis. Functionally, cell wall formation. The sequence is that of UDP-N-acetylmuramate--L-alanine ligase from Flavobacterium psychrophilum (strain ATCC 49511 / DSM 21280 / CIP 103535 / JIP02/86).